Here is a 99-residue protein sequence, read N- to C-terminus: NADH-ubiquinone oxidoreductase chain 4L (99 aa).

Transmembrane regions (helical) follow at residues Met-1–Gln-21, Ile-25–Val-45, and Val-56–Val-76.

It belongs to the complex I subunit 4L family.

The protein resides in the mitochondrion membrane. It catalyses the reaction a ubiquinone + NADH + 5 H(+)(in) = a ubiquinol + NAD(+) + 4 H(+)(out). Core subunit of the mitochondrial membrane respiratory chain NADH dehydrogenase (Complex I) that is believed to belong to the minimal assembly required for catalysis. Complex I functions in the transfer of electrons from NADH to the respiratory chain. The immediate electron acceptor for the enzyme is believed to be ubiquinone. In Albinaria caerulea (Land snail), this protein is NADH-ubiquinone oxidoreductase chain 4L (ND4L).